A 170-amino-acid polypeptide reads, in one-letter code: Photosystem I assembly protein Ycf3 (170 aa).

TPR repeat units lie at residues 35 to 68 (AFTY…EIDP), 72 to 105 (SYIL…NPFL), and 120 to 153 (GEQA…TPGN).

It belongs to the Ycf3 family.

The protein localises to the plastid. It is found in the chloroplast thylakoid membrane. Essential for the assembly of the photosystem I (PSI) complex. May act as a chaperone-like factor to guide the assembly of the PSI subunits. This is Photosystem I assembly protein Ycf3 from Oryza nivara (Indian wild rice).